The chain runs to 211 residues: Large ribosomal subunit protein bL25 (211 aa).

The tract at residues Gly-186–Gly-211 is disordered.

This sequence belongs to the bacterial ribosomal protein bL25 family. CTC subfamily. In terms of assembly, part of the 50S ribosomal subunit; part of the 5S rRNA/L5/L18/L25 subcomplex. Contacts the 5S rRNA. Binds to the 5S rRNA independently of L5 and L18.

This is one of the proteins that binds to the 5S RNA in the ribosome where it forms part of the central protuberance. In Gloeobacter violaceus (strain ATCC 29082 / PCC 7421), this protein is Large ribosomal subunit protein bL25.